The chain runs to 156 residues: Ribosomal RNA large subunit methyltransferase H (156 aa).

S-adenosyl-L-methionine contacts are provided by residues Leu72, Gly104, and 123-128; that span reads LGKMVW.

This sequence belongs to the RNA methyltransferase RlmH family. In terms of assembly, homodimer.

The protein localises to the cytoplasm. It catalyses the reaction pseudouridine(1915) in 23S rRNA + S-adenosyl-L-methionine = N(3)-methylpseudouridine(1915) in 23S rRNA + S-adenosyl-L-homocysteine + H(+). Functionally, specifically methylates the pseudouridine at position 1915 (m3Psi1915) in 23S rRNA. The sequence is that of Ribosomal RNA large subunit methyltransferase H from Roseobacter denitrificans (strain ATCC 33942 / OCh 114) (Erythrobacter sp. (strain OCh 114)).